We begin with the raw amino-acid sequence, 274 residues long: Large ribosomal subunit protein uL2 (274 aa).

Positions 222 to 257 are disordered; the sequence is GVAMNPVDHPHGGGEGRTSGGRHPVSPWGVPTKGYK.

This sequence belongs to the universal ribosomal protein uL2 family. Part of the 50S ribosomal subunit. Forms a bridge to the 30S subunit in the 70S ribosome.

Functionally, one of the primary rRNA binding proteins. Required for association of the 30S and 50S subunits to form the 70S ribosome, for tRNA binding and peptide bond formation. It has been suggested to have peptidyltransferase activity; this is somewhat controversial. Makes several contacts with the 16S rRNA in the 70S ribosome. The chain is Large ribosomal subunit protein uL2 from Nitrosococcus oceani (strain ATCC 19707 / BCRC 17464 / JCM 30415 / NCIMB 11848 / C-107).